Here is a 567-residue protein sequence, read N- to C-terminus: MGQSSSISSSNEEGSSHSKKFTNSKDILAYFNNKAQQQVTIPELVSFKGNLQIEDLNTPISHKALCNSLYFPQNHAMIVGIVTNMLRVLSNFPLMKSSYEPITGYGLLKCILLLNRARCAKFLKTKSYDQLKLLFISLSLQKTDKEELSEESENDGDKELTIKQIITGFDDVDTEMLCIPADFMLQFLTWLLILTVDCPTTNSKLDNTETHDQWGNFKVSALNLLRTMNPDVVGDIESHSITFQQFSTAIRTVMPNLLKPLENLMEHFFYLQHDLVDHDTNLSSIQDSKVMTPALLAQLSTGLPKELFIHKLQSLYIGRKSGFSMRSLQAKVFKWMAPSILVVSGMRITNSEEYAAEKNPRYRHFLEEFPKLKESDQMMDASHLNKRKTTFAVYIDDPWKVTNKDYFGDLNTRIIEISPRQDIYKVNQKGTIYFNTIGGGIGIGDKQPLIKPASKRYIPGNVSLTFDSTLEFAVFRNTGYGGSLDPGLLSMERKEENSPYELHFLIQDVEVWGCGGEKELEEQIKQLEWEEAESKRRQQINLRSLGEDRALLEMAGLVGQHQGGGSM.

The TLDc domain occupies 289-515 (KVMTPALLAQ…IQDVEVWGCG (227 aa)).

It belongs to the RTC5 family.

The protein localises to the cytoplasm. Its function is as follows. May be involved in a process influencing telomere capping. The sequence is that of Restriction of telomere capping protein 5 (RTC5) from Saccharomyces cerevisiae (strain YJM789) (Baker's yeast).